A 95-amino-acid polypeptide reads, in one-letter code: Large ribosomal subunit protein eL37x (95 aa).

Zn(2+)-binding residues include Cys-19, Cys-22, Cys-34, and Cys-37. The C4-type zinc finger occupies 19–37 (CVRCGRRSFHIQKSRCSAC). A disordered region spans residues 73–95 (RFKTGFREGTEAKPRSKASASSA). A compositionally biased stretch (basic and acidic residues) spans 77-86 (GFREGTEAKP).

This sequence belongs to the eukaryotic ribosomal protein eL37 family. It depends on Zn(2+) as a cofactor.

In terms of biological role, binds to the 23S rRNA. This is Large ribosomal subunit protein eL37x (RPL37C) from Arabidopsis thaliana (Mouse-ear cress).